Reading from the N-terminus, the 513-residue chain is Abl interactor 2 (513 aa).

Ser-40 is subject to Phosphoserine. Residues 45–107 (RALEETKAYT…DIHKEKVARR (63 aa)) form the t-SNARE coiled-coil homology domain. The segment at 167-431 (KMGGLPRTTP…PPEDYEEEEA (265 aa)) is disordered. Pro residues predominate over residues 174 to 185 (TTPPTQKPPSPP). 2 positions are modified to phosphoserine: Ser-183 and Ser-227. Residues 217 to 241 (PTRNMAPSQQSPVRTASVNQRNRTY) show a composition bias toward polar residues. A compositionally biased stretch (low complexity) spans 242–272 (SSSGSSGGSHPSSRSSSRENSGSGSVGVPIA). Over residues 273–282 (VPTPSPPSVF) the composition is skewed to pro residues. Residues 283-325 (PAPAGSAGTPPLPATSASAPAPLVPATVPSSTAPNAAAGGAPN) are compositionally biased toward low complexity. Thr-361 carries the post-translational modification Phosphothreonine. At Ser-368 the chain carries Phosphoserine. Over residues 376 to 399 (SITSQTSLQNQMNGGPFYSQNPVS) the composition is skewed to polar residues. A compositionally biased stretch (pro residues) spans 400–409 (DTPPPPPPVE). The 60-residue stretch at 451–510 (SYLEKVVAIYDYTKDKEDELSFQEGAIIYVIKKNDDGWYEGVMNGVTGLFPGNYVESIMH) folds into the SH3 domain.

It belongs to the ABI family. As to quaternary structure, component of the WAVE complex composed of ABI2, CYFIP1 or CYFIP2, BRK1, NCKAP1 and WASF1/WAVE1. Within the complex, a heterodimer containing NCKAP1 and CYFIP1 interacts with a heterotrimer formed by WAVE1, ABI2 and BRK1. CYFIP2 binds to activated RAC1 which causes the complex to dissociate, releasing activated WASF1. Interacts (via SH3 domain) with ABL1 and ABL2. In terms of assembly, (Microbial infection) Interacts with human cytomegalovirus UL135. In terms of processing, phosphorylated by ABL1. As to expression, widely expressed. Abundant in testes, ovary, thymus, and colon, with lower but detectable levels in prostate, peripheral blood leukocytes, and spleen.

The protein resides in the cytoplasm. It is found in the nucleus. It localises to the cell projection. The protein localises to the lamellipodium. Its subcellular location is the filopodium. The protein resides in the cytoskeleton. It is found in the cell junction. It localises to the adherens junction. Its function is as follows. Regulator of actin cytoskeleton dynamics underlying cell motility and adhesion. Functions as a component of the WAVE complex, which activates actin nucleating machinery Arp2/3 to drive lamellipodia formation. Acts as a regulator and substrate of nonreceptor tyrosine kinases ABL1 and ABL2 involved in processes linked to cell growth and differentiation. Positively regulates ABL1-mediated phosphorylation of ENAH, which is required for proper polymerization of nucleated actin filaments at the leading edge. Contributes to the regulation of actin assembly at the tips of neuron projections. In particular, controls dendritic spine morphogenesis and may promote dendritic spine specification toward large mushroom-type spines known as repositories of memory in the brain. In hippocampal neurons, may mediate actin-dependent BDNF-NTRK2 early endocytic trafficking that triggers dendrite outgrowth. Participates in ocular lens morphogenesis, likely by regulating lamellipodia-driven adherens junction formation at the epithelial cell-secondary lens fiber interface. Also required for nascent adherens junction assembly in epithelial cells. In Homo sapiens (Human), this protein is Abl interactor 2.